The sequence spans 187 residues: Ribosome-recycling factor (187 aa).

This sequence belongs to the RRF family.

Its subcellular location is the cytoplasm. Responsible for the release of ribosomes from messenger RNA at the termination of protein biosynthesis. May increase the efficiency of translation by recycling ribosomes from one round of translation to another. This Methylorubrum extorquens (strain CM4 / NCIMB 13688) (Methylobacterium extorquens) protein is Ribosome-recycling factor.